The chain runs to 488 residues: Regulatory protein ViaA (488 aa).

Belongs to the ViaA family. As to quaternary structure, homodimer. Interacts with RavA.

The protein localises to the cytoplasm. Functionally, component of the RavA-ViaA chaperone complex, which may act on the membrane to optimize the function of some of the respiratory chains. ViaA stimulates the ATPase activity of RavA. This chain is Regulatory protein ViaA, found in Yersinia enterocolitica serotype O:8 / biotype 1B (strain NCTC 13174 / 8081).